A 457-amino-acid chain; its full sequence is Argininosuccinate lyase (457 aa).

The protein belongs to the lyase 1 family. Argininosuccinate lyase subfamily.

It localises to the cytoplasm. It carries out the reaction 2-(N(omega)-L-arginino)succinate = fumarate + L-arginine. Its pathway is amino-acid biosynthesis; L-arginine biosynthesis; L-arginine from L-ornithine and carbamoyl phosphate: step 3/3. The polypeptide is Argininosuccinate lyase (Yersinia pseudotuberculosis serotype O:3 (strain YPIII)).